Reading from the N-terminus, the 549-residue chain is CDK5RAP3 protein homolog (549 aa).

3 consecutive short sequence motifs (shuffled ATG8-binding motif) follow at residues 274-277 (IDWD), 285-288 (IDWD), and 333-336 (ISWD).

Belongs to the CDK5RAP3 family. As to quaternary structure, substrate adapter component of the UFM1 ribosome E3 ligase (UREL) complex. Interacts with ATG8 family proteins.

Its function is as follows. Substrate adapter of E3 ligase complexes mediating ufmylation, the covalent attachment of the ubiquitin-like modifier UFM1 to substrate proteins, and which is involved in various processes, such as ribosome recycling and reticulophagy (also called ER-phagy). In Arabidopsis thaliana (Mouse-ear cress), this protein is CDK5RAP3 protein homolog.